The primary structure comprises 133 residues: Small ribosomal subunit protein bS18 (133 aa).

The interval 1-63 (MARPDMGGPK…GDEGGGRRGF (63 aa)) is disordered. Residues 9-39 (PKTGGFGGPRSGGFGGGGGGGFGGGGFGGGR) show a composition bias toward gly residues. A compositionally biased stretch (basic and acidic residues) spans 40-59 (GGDRGDRGDRDDRGGDEGGG).

Belongs to the bacterial ribosomal protein bS18 family. As to quaternary structure, part of the 30S ribosomal subunit. Forms a tight heterodimer with protein bS6.

Its function is as follows. Binds as a heterodimer with protein bS6 to the central domain of the 16S rRNA, where it helps stabilize the platform of the 30S subunit. The chain is Small ribosomal subunit protein bS18 from Anaeromyxobacter dehalogenans (strain 2CP-1 / ATCC BAA-258).